A 543-amino-acid polypeptide reads, in one-letter code: MVSSSLRLPSLTSLLFPATTRYPATLRRTVCLRNRPLSGFATAPSGTASPETKSSEVDRLRSDRAVTPRSQDFNAWYLDVIASAELADYGPVRGTMVIRPYGYAIWEAIQDYLNVKFKETGHSNMYFPQFIPYSFIEKEASHVEGFSPELALVTVGGGKELEEKLVVRPTSETIVNHMFTQWIHSYRDLPLMINQWANVTRWEMRTKPFIRTLEFLWQEGHTAHATPEEAEKEAKQMIEIYTRFAFEQTAIPVIPGRKSKLETFAGADITYTIEAMMGDRKALQAGTSHNLGQNFSRAFGTQFADENGERQHVWQTSWAVSTRFVGGIIMTHGDDTGLMLPPKIAPIQVVIVPIWKKDTEKTGVLSAASSVKEALQTAGVRVKLDDTDQRTPGWKFNFWEMKGIPLRIEIGPRDVSSNSVVVSRRDVPGKAGKVFGISMEPSTLVAYVKEKLDEIQTSLLEKALSFRDSNIVDVNSYAELKDAISSGKWARGPWSASDADEQRVKEETGATIRCFPFEQTQGTKTCLMTGNPAEEVAIFAKSY.

The interval 41–63 (ATAPSGTASPETKSSEVDRLRSD) is disordered. A compositionally biased stretch (basic and acidic residues) spans 53 to 63 (KSSEVDRLRSD).

It belongs to the class-II aminoacyl-tRNA synthetase family.

Its subcellular location is the plastid. The protein resides in the chloroplast. It localises to the mitochondrion. The catalysed reaction is tRNA(Pro) + L-proline + ATP = L-prolyl-tRNA(Pro) + AMP + diphosphate. Its function is as follows. Catalyzes the attachment of proline to tRNA(Pro) in a two-step reaction: proline is first activated by ATP to form Pro-AMP and then transferred to the acceptor end of tRNA(Pro). The chain is Proline--tRNA ligase, chloroplastic/mitochondrial from Arabidopsis thaliana (Mouse-ear cress).